A 383-amino-acid chain; its full sequence is Methenyltetrahydrofolate synthase domain-containing protein (383 aa).

The interval 249–301 (AGKDVTLQGEHQHLPEPGCQQTVPLSVGRRPPDTPGPETNSMEAAPGSPPGEG) is disordered. The RRM domain occupies 306 to 379 (ADVYVGNLPG…DTLRVALARQ (74 aa)).

This chain is Methenyltetrahydrofolate synthase domain-containing protein (MTHFSD), found in Homo sapiens (Human).